The following is a 320-amino-acid chain: Ferrochelatase (320 aa).

His194 and Glu275 together coordinate Fe cation.

The protein belongs to the ferrochelatase family. As to quaternary structure, monomer.

The protein localises to the cytoplasm. It catalyses the reaction heme b + 2 H(+) = protoporphyrin IX + Fe(2+). The protein operates within porphyrin-containing compound metabolism; protoheme biosynthesis; protoheme from protoporphyrin-IX: step 1/1. Catalyzes the ferrous insertion into protoporphyrin IX. This Salmonella typhi protein is Ferrochelatase.